Reading from the N-terminus, the 213-residue chain is MVNYPNGRSQSYSAVPKKQKTLTGLSVAKKGAPKSKSLVAFGKRGMNFEAEINATNDYYLSRGLAVIHKKPTPIQIVKVDYPQRSRAKITEAYFRQASTTDYSGVYKGHYVDFEAKETHQKTVFPLKNFHEHQIVHMSNVLAQRGIAFILLHFAALDETYLLPSSYLITFYYEKNGLKSIPLAYIRENGYKIETNHIPRIPYLEIVNKLCEVQ.

Positions 99, 101, 114, and 133 each coordinate Mg(2+).

This sequence belongs to the RecU family. Mg(2+) serves as cofactor.

Its subcellular location is the cytoplasm. It carries out the reaction Endonucleolytic cleavage at a junction such as a reciprocal single-stranded crossover between two homologous DNA duplexes (Holliday junction).. Functionally, endonuclease that resolves Holliday junction intermediates in genetic recombination. Cleaves mobile four-strand junctions by introducing symmetrical nicks in paired strands. Promotes annealing of linear ssDNA with homologous dsDNA. Required for DNA repair, homologous recombination and chromosome segregation. The chain is Holliday junction resolvase RecU from Lactococcus lactis subsp. cremoris (strain MG1363).